The primary structure comprises 351 residues: Rhodopsin (351 aa).

Residues 1 to 36 (MNGTEGPFFYIPMVNTTGIVRSPYEYPQYYLVNPAA) lie on the Extracellular side of the membrane. Asparagine 2 and asparagine 15 each carry an N-linked (GlcNAc...) asparagine glycan. A helical membrane pass occupies residues 37 to 61 (YAILGAYMFFLIIVGFPVNFMTLYV). At 62-73 (TLEHKKLRTPLN) the chain is on the cytoplasmic side. A helical transmembrane segment spans residues 74 to 96 (YILLNLAVADLFMVIGGFTTTMY). Topologically, residues 97–110 (TSMHGYFVLGRLGC) are extracellular. Cysteine 110 and cysteine 187 are joined by a disulfide. A helical transmembrane segment spans residues 111-133 (NLEGFFATLGGMISLWSLAVLAI). A 'Ionic lock' involved in activated form stabilization motif is present at residues 134–136 (ERW). The Cytoplasmic segment spans residues 134–152 (ERWVVVCKPISNFRFGENH). Residues 153-173 (AIMGVSLTWGMALACTVPPLV) form a helical membrane-spanning segment. Topologically, residues 174-202 (GWSRYIPEGMQCSCGIDYYTRAEGFNNES) are extracellular. Residue asparagine 200 is glycosylated (N-linked (GlcNAc...) asparagine). Residues 203-224 (FVLYMFFCHFTIPLTIIFFCYG) traverse the membrane as a helical segment. Over 225 to 252 (RLLCAVKEAAAAQQESETTQRAEREVTR) the chain is Cytoplasmic. Residues 253 to 274 (MVIIMVIGFLVCWLPYASVAWF) form a helical membrane-spanning segment. The Extracellular portion of the chain corresponds to 275 to 286 (IFTHQGSEFGPL). Residues 287–308 (FMTIPAFFAKSSSIYNPMIYIC) form a helical membrane-spanning segment. N6-(retinylidene)lysine is present on lysine 296. Topologically, residues 309–351 (MNKQFRHCMITTLFCGKNPFEGEEEGASSTKTEASSASSVSPA) are cytoplasmic. The S-palmitoyl cysteine moiety is linked to residue cysteine 323. The interval 330-351 (GEEEGASSTKTEASSASSVSPA) is disordered. Residues 335–351 (ASSTKTEASSASSVSPA) show a composition bias toward low complexity.

The protein belongs to the G-protein coupled receptor 1 family. Opsin subfamily. Phosphorylated on some or all of the serine and threonine residues present in the C-terminal region. In terms of processing, contains one covalently linked retinal chromophore.

Its subcellular location is the membrane. The protein resides in the cell projection. The protein localises to the cilium. It is found in the photoreceptor outer segment. In terms of biological role, photoreceptor required for image-forming vision at low light intensity. While most salt water fish species use retinal as chromophore, most freshwater fish use 3-dehydroretinal, or a mixture of retinal and 3-dehydroretinal. Light-induced isomerization of 11-cis to all-trans retinal triggers a conformational change that activates signaling via G-proteins. Subsequent receptor phosphorylation mediates displacement of the bound G-protein alpha subunit by arrestin and terminates signaling. The polypeptide is Rhodopsin (rho) (Sargocentron diadema (Crown squirrelfish)).